Consider the following 225-residue polypeptide: Insulin-induced gene 2 protein (225 aa).

At 1-28 the chain is on the cytoplasmic side; sequence MAEGETESPGPKKCGPYISSVTSQSVNL. Residues 29 to 51 traverse the membrane as a helical segment; it reads MIRGVVLFFIGVFLALVLNLLQI. Residues 52 to 70 lie on the Lumenal side of the membrane; the sequence is QRNVTLFPPDVIASIFSSA. The chain crosses the membrane as a helical span at residues 71–88; sequence WWVPPCCGTASAVIGLLY. The Cytoplasmic segment spans residues 89–103; sequence PCIDRHLGEPHKFKR. The chain crosses the membrane as a helical span at residues 104-126; sequence EWSSVMRCVAVFVGINHASAKVD. Over 127-129 the chain is Lumenal; that stretch reads FDN. The helical transmembrane segment at 130-148 threads the bilayer; that stretch reads NIQLSLTLAALSIGLWWTF. At 149-153 the chain is on the cytoplasmic side; sequence DRSRS. Ser151 carries the phosphoserine; by PCK1 modification. Residues 154-175 form a helical membrane-spanning segment; sequence GFGLGVGIAFLATVVTQLLVYN. At 176-189 the chain is on the lumenal side; the sequence is GVYQYTSPDFLYVR. Residues 190–207 traverse the membrane as a helical segment; that stretch reads SWLPCIFFAGGITMGNIG. Topologically, residues 208-225 are cytoplasmic; the sequence is RQLAMYECKVIAEKSHQE. Cysteine sulfenic acid (-SOH); alternate is present on Cys215. Cys215 is covalently cross-linked (Glycyl cysteine thioester (Cys-Gly) (interchain with G-Cter in ubiquitin); alternate). The KxHxx motif lies at 219 to 225; that stretch reads AEKSHQE.

This sequence belongs to the INSIG family. As to quaternary structure, interacts with SCAP; interaction is direct and only takes place in the presence of sterols; it prevents interaction between SCAP and the coat protein complex II (COPII). Associates with the SCAP-SREBP complex (composed of SCAP and SREBF1/SREBP1 or SREBF2/SREBP2); association is mediated via its interaction with SCAP and only takes place in the presence of sterols. Interacts with RNF139. Interacts with RNF145. Post-translationally, phosphorylation at Ser-151 by PCK1 reduces binding to oxysterol, disrupting the interaction between INSIG2 and SCAP, thereby promoting nuclear translocation of SREBP proteins (SREBF1/SREBP1 or SREBF2/SREBP2) and subsequent transcription of downstream lipogenesis-related genes. In terms of processing, polyubiquitinated by AMFR/gp78 at Cys-215 in some tissues such as adipose tissues, undifferentiated myoblasts and liver, leading to its degradation. In differentiated myotubes, Cys-215 oxidation prevents ubiquitination at the same site, resulting in protein stabilization. Oxidized at Cys-215 in differentiated myotubes, preventing ubiquitination at the same site, and resulting in protein stabilization.

The protein localises to the endoplasmic reticulum membrane. Oxysterol-binding protein that mediates feedback control of cholesterol synthesis by controlling both endoplasmic reticulum to Golgi transport of SCAP and degradation of HMGCR. Acts as a negative regulator of cholesterol biosynthesis by mediating the retention of the SCAP-SREBP complex in the endoplasmic reticulum, thereby blocking the processing of sterol regulatory element-binding proteins (SREBPs) SREBF1/SREBP1 and SREBF2/SREBP2. Binds oxysterol, including 22-hydroxycholesterol, 24-hydroxycholesterol, 25-hydroxycholesterol and 27-hydroxycholesterol, regulating interaction with SCAP and retention of the SCAP-SREBP complex in the endoplasmic reticulum. In presence of oxysterol, interacts with SCAP, retaining the SCAP-SREBP complex in the endoplasmic reticulum, thereby preventing SCAP from escorting SREBF1/SREBP1 and SREBF2/SREBP2 to the Golgi. Sterol deprivation or phosphorylation by PCK1 reduce oxysterol-binding, disrupting the interaction between INSIG2 and SCAP, thereby promoting Golgi transport of the SCAP-SREBP complex, followed by processing and nuclear translocation of SREBF1/SREBP1 and SREBF2/SREBP2. Also regulates cholesterol synthesis by regulating degradation of HMGCR: initiates the sterol-mediated ubiquitin-mediated endoplasmic reticulum-associated degradation (ERAD) of HMGCR via recruitment of the reductase to the ubiquitin ligase RNF139. The protein is Insulin-induced gene 2 protein of Homo sapiens (Human).